Consider the following 230-residue polypeptide: Large ribosomal subunit protein uL1 (230 aa).

Belongs to the universal ribosomal protein uL1 family. As to quaternary structure, part of the 50S ribosomal subunit.

In terms of biological role, binds directly to 23S rRNA. The L1 stalk is quite mobile in the ribosome, and is involved in E site tRNA release. Its function is as follows. Protein L1 is also a translational repressor protein, it controls the translation of the L11 operon by binding to its mRNA. The sequence is that of Large ribosomal subunit protein uL1 from Acidithiobacillus ferrooxidans (strain ATCC 53993 / BNL-5-31) (Leptospirillum ferrooxidans (ATCC 53993)).